A 431-amino-acid polypeptide reads, in one-letter code: Glutamate-1-semialdehyde 2,1-aminomutase (431 aa).

Lys-265 carries the post-translational modification N6-(pyridoxal phosphate)lysine.

This sequence belongs to the class-III pyridoxal-phosphate-dependent aminotransferase family. HemL subfamily. Homodimer. Pyridoxal 5'-phosphate is required as a cofactor.

Its subcellular location is the cytoplasm. The enzyme catalyses (S)-4-amino-5-oxopentanoate = 5-aminolevulinate. It functions in the pathway porphyrin-containing compound metabolism; protoporphyrin-IX biosynthesis; 5-aminolevulinate from L-glutamyl-tRNA(Glu): step 2/2. The sequence is that of Glutamate-1-semialdehyde 2,1-aminomutase from Vibrio atlanticus (strain LGP32) (Vibrio splendidus (strain Mel32)).